The chain runs to 1331 residues: Protein bunched, class 2/F/G isoform (1331 aa).

Disordered stretches follow at residues 1–35, 101–317, 429–471, 553–582, 597–665, 681–750, 814–853, and 908–950; these read MFDRTVNAKFKPASSNAGPGNNPVRRNSMLTPSRG, GATP…MSED, NGGN…TQSM, QQQQQQQLFDSVNANAASSPNPAGDPNNMD, QLKQ…PLTP, NFQL…AAVT, LMVPQQQQQQQHQEEQQQQPQQQQQPLPPANIASASANNS, and QQIQ…GPND. The segment covering 13–31 has biased composition (polar residues); sequence ASSNAGPGNNPVRRNSMLT. 2 stretches are compositionally biased toward low complexity: residues 106-165 and 175-190; these read TVSR…KASS and GGAATSAATGTTAAAG. Residues 191–212 show a composition bias toward basic residues; sequence SHHHQPHHHHHHHHHHHQHHNH. Gly residues predominate over residues 236–248; the sequence is ASAGGGGGGGSGS. Over residues 263 to 273 the composition is skewed to polar residues; the sequence is TTSSFEITSVT. The segment covering 285–294 has biased composition (acidic residues); it reads TGDESADDLD. Positions 295–306 are enriched in basic and acidic residues; that stretch reads ESHTDDNSRITD. Residues 432–443 show a composition bias toward polar residues; that stretch reads NNNEKTGSSTSE. Composition is skewed to low complexity over residues 553 to 580, 614 to 641, and 701 to 734; these read QQQQQQQLFDSVNANAASSPNPAGDPNN, YANYQNGGDSAVGAASNNNSAAAATGES, and VPQPFNPQQQQQQTPQQSTAQQAAAAANATSAVT. Positions 740–750 are enriched in polar residues; it reads QTSNTSNAAVT. The segment covering 917–933 has biased composition (polar residues); it reads PNAESETESFITASNPG. The leucine-zipper stretch occupies residues 1194-1215; the sequence is LKERISELMDKINKLELENSIL.

It belongs to the TSC-22/Dip/Bun family.

Its subcellular location is the cytoplasm. The protein localises to the nucleus. Probable transcription factor required for peripheral nervous system morphogenesis, eye development and oogenesis. May be required for the transmission of the dpp signal and for a morphogenetic movement of the medulla in the brain that reorients the second optic lobe relative to the first. Plays a role in determining proper dorsal cell fates leading to the formation of the dorsal appendages. This Drosophila melanogaster (Fruit fly) protein is Protein bunched, class 2/F/G isoform (bun).